We begin with the raw amino-acid sequence, 594 residues long: Invasin CotH2 (594 aa).

The signal sequence occupies residues 1–19; it reads MKLSLTIVSSSFLVAIAHA. N-linked (GlcNAc...) asparagine glycans are attached at residues Asn77, Asn162, Asn226, Asn316, Asn441, Asn519, and Asn533. The disordered stretch occupies residues 529-565; it reads PPAANGTATSTNDGGNTHTAAGESKPASSSESSGSKI. Positions 534-547 are enriched in polar residues; the sequence is GTATSTNDGGNTHT. Residues 548-565 show a composition bias toward low complexity; sequence AAGESKPASSSESSGSKI. A lipid anchor (GPI-anchor amidated serine) is attached at Ser571. A propeptide spans 572–594 (removed in mature form); that stretch reads GASRSAVSTVLLGVTALVATAIF.

As to quaternary structure, interacts with host epithelial cell surface HSPA5/BiP protein.

The protein localises to the cell membrane. Its function is as follows. Promotes invasion of host epithelial cells by adhering to receptors on the host cell surface to facilitate endocytosis of the pathogen into host cells. Binds HSPA5/BiP protein on the cell surface of host epithelial cells. This Rhizopus delemar (strain RA 99-880 / ATCC MYA-4621 / FGSC 9543 / NRRL 43880) (Mucormycosis agent) protein is Invasin CotH2.